The primary structure comprises 290 residues: UPF0761 membrane protein YihY (290 aa).

Transmembrane regions (helical) follow at residues 44–64 (LLSL…FPMF), 104–124 (VGAC…DSAL), 140–160 (FAVY…SLAI), 183–203 (IFPL…VPTI), 210–230 (AIVG…GFAL), and 244–264 (VLAV…IVLL).

The protein belongs to the UPF0761 family.

The protein localises to the cell inner membrane. The polypeptide is UPF0761 membrane protein YihY (Escherichia coli O7:K1 (strain IAI39 / ExPEC)).